Consider the following 526-residue polypeptide: GMP synthase [glutamine-hydrolyzing] (526 aa).

Positions 9–207 (RILILNFGSQ…VLDICSCQGR (199 aa)) constitute a Glutamine amidotransferase type-1 domain. The Nucleophile role is filled by C86. Active-site residues include H181 and E183. The 194-residue stretch at 208-401 (WTPNNIKENI…LGLPFHMLYR (194 aa)) folds into the GMPS ATP-PPase domain. 235–241 (SGGVDST) is a binding site for ATP.

As to quaternary structure, homodimer.

The catalysed reaction is XMP + L-glutamine + ATP + H2O = GMP + L-glutamate + AMP + diphosphate + 2 H(+). Its pathway is purine metabolism; GMP biosynthesis; GMP from XMP (L-Gln route): step 1/1. In terms of biological role, catalyzes the synthesis of GMP from XMP. The sequence is that of GMP synthase [glutamine-hydrolyzing] from Baumannia cicadellinicola subsp. Homalodisca coagulata.